Consider the following 1037-residue polypeptide: PH and SEC7 domain-containing protein 3 (1037 aa).

A disordered region spans residues 37–70 (EEKTPDSSDHGGSTLLPPTVTNEFPEYGTMEEGG). Serine 76 is modified (phosphoserine). Disordered stretches follow at residues 169–189 (TASHKPQRAHRTFPVGPGKSP), 236–255 (RVPESACPVSSSSAGSHNPV), 262–284 (REQRSDLGREHPRGYDRGGSMGR), 304–335 (EAESRHPPERTASPVSKEFAKRPSHSSPACGV), and 353–375 (APSERPGTSAGTLSPMPLGESGE). Positions 237-251 (VPESACPVSSSSAGS) are enriched in low complexity. Basic and acidic residues predominate over residues 262–277 (REQRSDLGREHPRGYD). The 209-residue stretch at 515–723 (NSVYTRGPQE…KALYNSIKNE (209 aa)) folds into the SEC7 domain. The span at 730 to 747 (DDEEKKKSPSEGTDEKAN) shows a compositional bias: basic and acidic residues. Residues 730–762 (DDEEKKKSPSEGTDEKANGTHPKTISRIGSTTN) are disordered. A compositionally biased stretch (polar residues) spans 750-762 (HPKTISRIGSTTN). At serine 759 the chain carries Phosphoserine. Residues 774-887 (AVYKSGFLAR…WINKINCVAA (114 aa)) enclose the PH domain. Residues 911–941 (ATTTKLSQEEQLKSHESKLKQITTELAEHRS) are a coiled coil. The tract at residues 984-1037 (LLTTDGNEPVGLKKSHSSPSLNPDASPVTAKVKRNVSERKDHRPETPGIKQKVT) is disordered. Residues serine 998, serine 1000, serine 1001, serine 1003, and serine 1009 each carry the phosphoserine modification. A compositionally biased stretch (basic and acidic residues) spans 1018–1028 (NVSERKDHRPE).

As to expression, ubiquitously expressed, with highest levels in liver. Present in brain, with highest levels in olfactory bulb, cortex, hippocampal pyramidal cell layer and cerebellar granule cell layer (at protein level).

It localises to the cell membrane. The protein resides in the cell projection. Its subcellular location is the ruffle membrane. It is found in the postsynaptic density. Guanine nucleotide exchange factor for ARF6. The polypeptide is PH and SEC7 domain-containing protein 3 (Psd3) (Mus musculus (Mouse)).